We begin with the raw amino-acid sequence, 299 residues long: Acetylglutamate kinase (299 aa).

Residues Gly70–Gly71, Arg92, and Asn186 each bind substrate.

It belongs to the acetylglutamate kinase family. ArgB subfamily.

It is found in the cytoplasm. The catalysed reaction is N-acetyl-L-glutamate + ATP = N-acetyl-L-glutamyl 5-phosphate + ADP. It functions in the pathway amino-acid biosynthesis; L-arginine biosynthesis; N(2)-acetyl-L-ornithine from L-glutamate: step 2/4. Its function is as follows. Catalyzes the ATP-dependent phosphorylation of N-acetyl-L-glutamate. This chain is Acetylglutamate kinase, found in Thermoanaerobacter pseudethanolicus (strain ATCC 33223 / 39E) (Clostridium thermohydrosulfuricum).